A 30-amino-acid polypeptide reads, in one-letter code: LGPQLNKGCATCSIGAACLVDGPIPDEIAG.

It localises to the secreted. Bacteriocin that inhibits the growth of several Gram-positive bacteria, especially the food-borne pathogens L.monocytogenes, B.cereus strain ATCC 11778, B.cereus strain ATCC 21366, B.cereus strain ATCC 10876 and B.cereus strain ATCC 14579. Likely to act by disrupting the pathogen membrane resulting in leakage of intracellular constituents. Does not inhibit the growth of Gram-negative bacteria. This is Mejucin from Bacillus subtilis.